Here is a 411-residue protein sequence, read N- to C-terminus: Multidrug resistance protein MdtG (411 aa).

The next 10 helical transmembrane spans lie at 14–34 (LFVA…IMPF), 56–76 (LVFS…GGLA), 89–109 (ALGM…WQFL), 113–133 (AVLG…ATQV), 144–164 (TLST…GLLA), 171–191 (PVFY…LLYV), 219–239 (ILSL…IAPI), 254–274 (LAFV…MSAP), 288–308 (ILVF…FVQT), and 376–396 (AVFC…WWCL).

The protein belongs to the major facilitator superfamily. DHA1 family. MdtG (TC 2.A.1.2.20) subfamily.

It is found in the cell inner membrane. This chain is Multidrug resistance protein MdtG, found in Serratia proteamaculans (strain 568).